Reading from the N-terminus, the 248-residue chain is UPF0246 protein MYPE6270 (248 aa).

It belongs to the UPF0246 family.

This is UPF0246 protein MYPE6270 from Malacoplasma penetrans (strain HF-2) (Mycoplasma penetrans).